The sequence spans 102 residues: uncharacterized protein (102 aa).

[3Fe-4S] cluster-binding residues include C10, C16, and C55. Residues 66 to 102 (DAGDDERASADPARSPAEAERHAAKDQRIPGGHDGTV) form a disordered region. The segment covering 82–93 (AEAERHAAKDQR) has biased composition (basic and acidic residues).

[3Fe-4S] cluster serves as cofactor.

Its function is as follows. Electron transport protein for the cytochrome systems. This is an uncharacterized protein from Sinorhizobium fredii (strain NBRC 101917 / NGR234).